The sequence spans 526 residues: Na(+)/H(+) antiporter NhaB (526 aa).

The next 12 helical transmembrane spans lie at 25–45, 52–72, 89–109, 130–164, 204–224, 242–262, 305–325, 350–370, 391–411, 448–468, 479–499, and 505–525; these read ILLF…AAGW, IFTL…LLAI, LVAN…IYFM, LSLA…FYAI, LMMH…VGEP, IRMA…CILV, AVIA…VGLI, QEAL…AVII, LALF…VFVG, VATP…LAPL, MALP…ELLL, and WFYQ…LPAL.

It belongs to the NhaB Na(+)/H(+) (TC 2.A.34) antiporter family.

The protein resides in the cell inner membrane. It catalyses the reaction 2 Na(+)(in) + 3 H(+)(out) = 2 Na(+)(out) + 3 H(+)(in). Its function is as follows. Na(+)/H(+) antiporter that extrudes sodium in exchange for external protons. The sequence is that of Na(+)/H(+) antiporter NhaB from Aeromonas salmonicida (strain A449).